We begin with the raw amino-acid sequence, 240 residues long: Large ribosomal subunit protein bL25 (240 aa).

Disordered stretches follow at residues methionine 1–arginine 21 and glycine 204–lysine 240. Over residues glycine 204–glycine 229 the composition is skewed to low complexity. Over residues glycine 230–lysine 240 the composition is skewed to basic and acidic residues.

It belongs to the bacterial ribosomal protein bL25 family. CTC subfamily. Part of the 50S ribosomal subunit; part of the 5S rRNA/L5/L18/L25 subcomplex. Contacts the 5S rRNA. Binds to the 5S rRNA independently of L5 and L18.

Its function is as follows. This is one of the proteins that binds to the 5S RNA in the ribosome where it forms part of the central protuberance. The protein is Large ribosomal subunit protein bL25 of Anaeromyxobacter dehalogenans (strain 2CP-1 / ATCC BAA-258).